A 311-amino-acid polypeptide reads, in one-letter code: tRNA pseudouridine synthase B (311 aa).

Asp52 functions as the Nucleophile in the catalytic mechanism.

This sequence belongs to the pseudouridine synthase TruB family. Type 1 subfamily.

The catalysed reaction is uridine(55) in tRNA = pseudouridine(55) in tRNA. In terms of biological role, responsible for synthesis of pseudouridine from uracil-55 in the psi GC loop of transfer RNAs. The chain is tRNA pseudouridine synthase B from Burkholderia mallei (strain ATCC 23344).